A 77-amino-acid chain; its full sequence is MKEQKWIHEGLITESLPNGMFRVRLDNEDLILGYVSGRIRRSFIRILPGDRVKIEVSRYDSTRGRIIYRLRNKDSND.

Residues 1–71 (MKEQKWIHEG…TRGRIIYRLR (71 aa)) enclose the S1-like domain.

Belongs to the IF-1 family. As to quaternary structure, component of the 30S ribosomal translation pre-initiation complex which assembles on the 30S ribosome in the order IF-2 and IF-3, IF-1 and N-formylmethionyl-tRNA(fMet); mRNA recruitment can occur at any time during PIC assembly.

The protein resides in the plastid. Its subcellular location is the chloroplast. One of the essential components for the initiation of protein synthesis. Stabilizes the binding of IF-2 and IF-3 on the 30S subunit to which N-formylmethionyl-tRNA(fMet) subsequently binds. Helps modulate mRNA selection, yielding the 30S pre-initiation complex (PIC). Upon addition of the 50S ribosomal subunit IF-1, IF-2 and IF-3 are released leaving the mature 70S translation initiation complex. In Nandina domestica (Heavenly bamboo), this protein is Translation initiation factor IF-1, chloroplastic.